Reading from the N-terminus, the 35-residue chain is Mu-theraphotoxin-Ca2a (35 aa).

3 disulfide bridges follow: Cys-2-Cys-17, Cys-9-Cys-24, and Cys-16-Cys-31.

It belongs to the neurotoxin 10 (Hwtx-1) family. 10 (haplotoxin-1) subfamily. As to expression, expressed by the venom gland.

Its subcellular location is the secreted. Functionally, potently inhibits Nav1.7/SCN9A (IC(50)=98.1 nM), and moderately inhibits Nav1.2/SCN2A (IC(50)=216.3 nM), Nav1.6/SCN8A (IC(50)=313.6 nM), and Nav1.3/SCN3A (IC(50)=491.3 nM). Hyperpolarizes the slow inactivation, but does not alter the voltage-dependent activation or fast inactivation of Nav1.7/SCN9A. Binds with Nav1.7/SCN9A at the extracellular S3-S4 linker of domain II (site 4). In vivo, exhibits dose-dependent analgesic efficacy by reducing pain responses in rodent models of formalin-induced paw licking, hot plate test, and acetic acid-induced writhing. The protein is Mu-theraphotoxin-Ca2a of Cyriopagopus albostriatus (Cambodian tiger tarantula).